A 256-amino-acid polypeptide reads, in one-letter code: Omega-amidase YafV (256 aa).

A CN hydrolase domain is found at 4-234 (LKITLLQQPL…ATRIDAELSM (231 aa)). The active-site Proton acceptor is the Glu42. Lys107 serves as the catalytic Proton donor. Cys141 serves as the catalytic Nucleophile.

The protein belongs to the carbon-nitrogen hydrolase superfamily. NIT1/NIT2 family.

The catalysed reaction is a monoamide of a dicarboxylate + H2O = a dicarboxylate + NH4(+). In terms of biological role, hydrolyzes alpha-ketoglutaramate (a-KGM) to alpha-ketoglutarate (alpha-KG) and ammonia, has weak activity on L-glutamine, almost no activity on deaminated glutathione (dGSH) and none on glutathione. May function as a metabolite repair enzyme. In Escherichia coli (strain K12), this protein is Omega-amidase YafV (yafV).